A 231-amino-acid chain; its full sequence is 2,3-bisphosphoglycerate-dependent phosphoglycerate mutase (231 aa).

Substrate is bound by residues 8-15 (RHGESEWN), 21-22 (TG), Arg-60, 87-90 (ERHY), Lys-98, 114-115 (RR), and 183-184 (GN). The active-site Tele-phosphohistidine intermediate is the His-9. Glu-87 serves as the catalytic Proton donor/acceptor.

This sequence belongs to the phosphoglycerate mutase family. BPG-dependent PGAM subfamily.

It carries out the reaction (2R)-2-phosphoglycerate = (2R)-3-phosphoglycerate. It participates in carbohydrate degradation; glycolysis; pyruvate from D-glyceraldehyde 3-phosphate: step 3/5. Its function is as follows. Catalyzes the interconversion of 2-phosphoglycerate and 3-phosphoglycerate. In Streptococcus pyogenes serotype M49 (strain NZ131), this protein is 2,3-bisphosphoglycerate-dependent phosphoglycerate mutase.